The following is an 86-amino-acid chain: Cell division protein ZapA (86 aa).

It belongs to the ZapA family. Type 2 subfamily. Homodimer. Interacts with FtsZ.

The protein resides in the cytoplasm. In terms of biological role, activator of cell division through the inhibition of FtsZ GTPase activity, therefore promoting FtsZ assembly into bundles of protofilaments necessary for the formation of the division Z ring. It is recruited early at mid-cell but it is not essential for cell division. This Oceanobacillus iheyensis (strain DSM 14371 / CIP 107618 / JCM 11309 / KCTC 3954 / HTE831) protein is Cell division protein ZapA.